The primary structure comprises 957 residues: MFGALIKKLVGSKNERELKRMWPIVERINQLEPELVKLSDEELRGKTAQFKERYSRGESLDSMLPEAFAVCREAGKRVLGMRHFDVQLIGGMVLHSGKIAEMKTGEGKTLVATLPSYLNGISGRGVHVVTVNDYLAKRDSDWMGRIHKFLGLSVGVIVHGLEDYERREAYAADITYGTNNEFGFDYLRDNMKFDLSEYVQRPFNFAVVDEVDSILIDEARTPLIISGPTEDSTDKYYIIDRIIPLLKKGEVIEVEANTLSGKRKTYTGDFTVDEKAKSASLTEEGVLKVEKLLKIENLYDPRNMEILHHTQQALRAHALFKRDVDYVVRDNEVLIVDEFTGRLMPGRRWSDGLHQAIEAKEGAKIENENQTLATITFQNYFRMYEKLSGMTGTADTEAEEFHKIYKLDVVVIPTNRPLLRPDFPDVIYKTEREKFNAVIGEIKELHEKGQPILVGTISIEKSEELSELLKRQGIPHFVLNAKQHEKEAEIVAQAGRKGMVTIATNMAGRGTDIVLGGNPDGLARQEFNGTPETRTEEFMAAFIETLSKDLPEKELLQSLEREYPGIMPVVAACLKQGGEIDLEELERQVLAEHQKQFNLLVDKNKPVCAAEHDEVVALGGLHILGTERHESRRIDNQLRGRSGRQGDPGSSRFYLSLQDDLLRIFGSERVSMIMDKLGIEEGEAITHGLITRAIENAQKKVEAHNFEIRKHLIEYDDVMNKQREVIYTQRKEILGGNEIRESFTGMMEEAVGDIVAAYVIDRTPAREWDWQGITDTVQKVFGFHLDLTPDLMDRITPVNFDETLRTTARERFQQRLTEFGDDLMDHLIKVIMLQVIDAQWKDHLLSIDHLKEGIGLRGYGQKDPKQEYKREAYKLFMDMMLRIREEVVEKIFWVQVGSEEEMEQFELEQPQQRMVFNLVDEEAAAPAQAPSKSKRSAGRNDPCPCGSGQKYKKCCGK.

ATP-binding positions include glutamine 87, 105-109, and aspartate 512; that span reads GEGKT. Positions 924-957 are disordered; sequence AAPAQAPSKSKRSAGRNDPCPCGSGQKYKKCCGK. Zn(2+) contacts are provided by cysteine 943, cysteine 945, cysteine 954, and cysteine 955.

Belongs to the SecA family. In terms of assembly, monomer and homodimer. Part of the essential Sec protein translocation apparatus which comprises SecA, SecYEG and auxiliary proteins SecDF-YajC and YidC. Zn(2+) serves as cofactor.

Its subcellular location is the cell inner membrane. The protein resides in the cytoplasm. The catalysed reaction is ATP + H2O + cellular proteinSide 1 = ADP + phosphate + cellular proteinSide 2.. In terms of biological role, part of the Sec protein translocase complex. Interacts with the SecYEG preprotein conducting channel. Has a central role in coupling the hydrolysis of ATP to the transfer of proteins into and across the cell membrane, serving as an ATP-driven molecular motor driving the stepwise translocation of polypeptide chains across the membrane. The protein is Protein translocase subunit SecA of Geobacter sp. (strain M21).